Reading from the N-terminus, the 235-residue chain is Centromere protein H (235 aa).

Residues 1–23 (MAGRLSESVGSGPGAEAETAADP) form a disordered region. The stretch at 125-145 (EIIQAHQQARVIRENLNDIRR) forms a coiled coil.

The protein belongs to the CENP-H/MCM16 family. Component of the CENPA-HI complex, at least composed of CENPH, CENPI, CENPK, CENPL, CENPM, CENPO and CENPP. Interacts with NDC80.

It is found in the nucleus. The protein localises to the chromosome. Its subcellular location is the centromere. It localises to the kinetochore. Functionally, component of the CENPA-HI complex, a centromeric complex involved in assembly of kinetochore proteins, mitotic progression and chromosome segregation. Required for the localization of CENPC but not CENPA to the centromere. It however may be involved in incorporation of newly synthesized CENPA into centromeres via its interaction with the CENPA-NAC complex. In Gallus gallus (Chicken), this protein is Centromere protein H (CENPH).